Here is a 67-residue protein sequence, read N- to C-terminus: Spiniferin (67 aa).

The first 23 residues, 1-23 (MKTQLAILLITLVLFQMFSQSDA), serve as a signal peptide directing secretion. The residue at position 36 (L36) is a Leucine amide. A propeptide spanning residues 40-67 (GLNDLSDLDELFDGEISKADLDFLREIM) is cleaved from the precursor.

Belongs to the non-disulfide-bridged peptide (NDBP) superfamily. Short antimicrobial peptide (group 4) family. In terms of tissue distribution, expressed by the venom gland.

The protein resides in the secreted. Its subcellular location is the target cell membrane. In terms of biological role, alpha-helical and amphipathic peptide with weak antimicrobial activities against both Gram-positive (MIC=41 uM to &gt;82 uM) and Gram-negative (MIC&gt;82 uM) bacteria. It has extremely weak hemolytic activity against human erythrocytes. The protein is Spiniferin of Heterometrus spinifer (Asia giant forest scorpion).